A 277-amino-acid polypeptide reads, in one-letter code: Protein PTST, chloroplastic (277 aa).

Residues 1–44 (MGCVPRIEFGCSSQSLTLSWNLRAWNLCRLNTISHFQKLPYPLV) constitute a chloroplast transit peptide. Residues 95 to 152 (DTERSKLVKKLSEANQQNRFLKRQLKTQEHEITNIKTELALMELEVQALVKLAEEIAN) adopt a coiled-coil conformation.

As to quaternary structure, interacts with GBSS1.

Its subcellular location is the plastid. The protein resides in the chloroplast stroma. In terms of biological role, involved in targeting GBSS1 to the starch granule. Was originally thought to be a carbohydrate-binding scaffold protein, but it has been shown that it is mainly found as a soluble protein and that interaction with GBSS1 is a pre-requisite for subsequent starch granule binding. Dissociation from starch as a function of pH, Mg(2+) concentration or redox state is not observed. Interacts primarily with amylopectin and is required for amylose synthesis. This chain is Protein PTST, chloroplastic, found in Arabidopsis thaliana (Mouse-ear cress).